The following is a 508-amino-acid chain: 3-octaprenyl-4-hydroxybenzoate carboxy-lyase (508 aa).

Asn-178 lines the Mn(2+) pocket. Prenylated FMN-binding positions include 181–183 (IYR), 195–197 (RWL), and 200–201 (RG). Glu-244 contributes to the Mn(2+) binding site. Asp-303 acts as the Proton donor in catalysis.

Belongs to the UbiD family. As to quaternary structure, homohexamer. Prenylated FMN serves as cofactor. It depends on Mn(2+) as a cofactor.

Its subcellular location is the cell membrane. The catalysed reaction is a 4-hydroxy-3-(all-trans-polyprenyl)benzoate + H(+) = a 2-(all-trans-polyprenyl)phenol + CO2. It participates in cofactor biosynthesis; ubiquinone biosynthesis. Its function is as follows. Catalyzes the decarboxylation of 3-octaprenyl-4-hydroxy benzoate to 2-octaprenylphenol, an intermediate step in ubiquinone biosynthesis. This is 3-octaprenyl-4-hydroxybenzoate carboxy-lyase from Cupriavidus taiwanensis (strain DSM 17343 / BCRC 17206 / CCUG 44338 / CIP 107171 / LMG 19424 / R1) (Ralstonia taiwanensis (strain LMG 19424)).